Consider the following 228-residue polypeptide: Small ribosomal subunit protein uS3 (228 aa).

Residues 39-107 form the KH type-2 domain; that stretch reads VREFIRERLK…PVHINIEEIR (69 aa).

The protein belongs to the universal ribosomal protein uS3 family. As to quaternary structure, part of the 30S ribosomal subunit. Forms a tight complex with proteins S10 and S14.

Binds the lower part of the 30S subunit head. Binds mRNA in the 70S ribosome, positioning it for translation. The chain is Small ribosomal subunit protein uS3 from Halorhodospira halophila (strain DSM 244 / SL1) (Ectothiorhodospira halophila (strain DSM 244 / SL1)).